A 321-amino-acid polypeptide reads, in one-letter code: 2,3,4,5-tetrahydropyridine-2,6-dicarboxylate N-succinyltransferase (321 aa).

The Mg(2+) site is built by D166 and E183. The Acyl-anhydride intermediate role is filled by E199. Succinyl-CoA-binding positions include R201, G216, S219, A242, 257-258 (EA), G265, K281, and 294-297 (RRNS).

Belongs to the type 2 tetrahydrodipicolinate N-succinyltransferase family. Homotrimer.

The protein resides in the cytoplasm. It catalyses the reaction (S)-2,3,4,5-tetrahydrodipicolinate + succinyl-CoA + H2O = (S)-2-succinylamino-6-oxoheptanedioate + CoA. The protein operates within amino-acid biosynthesis; L-lysine biosynthesis via DAP pathway; LL-2,6-diaminopimelate from (S)-tetrahydrodipicolinate (succinylase route): step 1/3. Its function is as follows. Catalyzes the conversion of the cyclic tetrahydrodipicolinate (THDP) into the acyclic N-succinyl-L-2-amino-6-oxopimelate using succinyl-CoA. This Micrococcus luteus (strain ATCC 4698 / DSM 20030 / JCM 1464 / CCM 169 / CCUG 5858 / IAM 1056 / NBRC 3333 / NCIMB 9278 / NCTC 2665 / VKM Ac-2230) (Micrococcus lysodeikticus) protein is 2,3,4,5-tetrahydropyridine-2,6-dicarboxylate N-succinyltransferase.